A 103-amino-acid polypeptide reads, in one-letter code: Large ribosomal subunit protein uL24 (103 aa).

The protein belongs to the universal ribosomal protein uL24 family. In terms of assembly, part of the 50S ribosomal subunit.

Functionally, one of two assembly initiator proteins, it binds directly to the 5'-end of the 23S rRNA, where it nucleates assembly of the 50S subunit. In terms of biological role, one of the proteins that surrounds the polypeptide exit tunnel on the outside of the subunit. The polypeptide is Large ribosomal subunit protein uL24 (Listeria monocytogenes serotype 4a (strain HCC23)).